Consider the following 724-residue polypeptide: Disks large homolog 4 (724 aa).

2 S-palmitoyl cysteine lipidation sites follow: C3 and C5. Positions 15-35 (QDEDTPPLEHSPAHLPNQANS) are disordered. PDZ domains lie at 65–151 (EITL…VMRR) and 160–246 (EIKL…VAKP). 2 positions are modified to phosphoserine: S73 and S142. Phosphotyrosine is present on Y240. S295 is modified (phosphoserine). The region spanning 313–393 (RIVIHRGSTG…QTVTIIAQYK (81 aa)) is the PDZ 3 domain. Residues S415 and S418 each carry the phosphoserine modification. Phosphothreonine is present on T420. Residues S422, S425, S449, and S480 each carry the phosphoserine modification. The SH3 domain maps to 428–498 (KRGFYIRALF…PSKRRVERRE (71 aa)). Residues 534–709 (ARPIIILGPT…IYHKVKRVIE (176 aa)) form the Guanylate kinase-like domain. Y580 bears the Phosphotyrosine mark. Phosphoserine is present on residues S606 and S654. Y715 carries the post-translational modification Phosphotyrosine.

Belongs to the MAGUK family. In terms of assembly, interacts through its PDZ domains with ANO2 and NETO1. Interacts with KCNJ4. Interacts through its first two PDZ domains with GRIN2A, GRIN2B, GRIN2C and GRIN2D. Interacts with ERBB4. Interacts with KCNA1, KCNA2, KCNA3 and KCNA4. Interacts with LRRC4 and LRRC4B. Interacts with SYNGAP1. Interacts with ASIC3. Interacts with SEMA4C. Interacts with CXADR. Interacts with KCND2. Interacts (via first PDZ domain) with CRIPT. Interacts through its first PDZ domain with GRIK2 and KCNA4. Interacts through its second PDZ domain with the PDZ domain of NOS1 or the C-terminus of CAPON. Interacts through its third PDZ domain with NLGN1 and CRIPT, and probably with NLGN2 and NLGN3. Interacts through its guanylate kinase-like domain with DLGAP1/GKAP, DLGAP2, DLGAP3, DLGAP4, MAP1A, BEGAIN and SIPA1L1. Interacts through its guanylate kinase-like domain with KIF13B. Isoform 2 interacts through an L27 domain with HGS/HRS and the first L27 domain of CASK. Interacts with ANKS1B. Interacts with ADR1B. May interact with HTR2A. Interacts with ADAM22, KLHL17 and LGI1. Interacts with FRMPD4 (via C-terminus). Interacts with LRFN1 and LRFN2. Interacts with LRFN4. Interacts (via N-terminal tandem pair of PDZ domains) with GPER1 (via C-terminus tail motif); the interaction is direct and induces the increase of GPER1 protein levels residing at the plasma membrane surface in a estradiol-independent manner. Interacts (via N-terminus tandem pair of PDZ domains) with NOS1 (via N-terminal domain). Interacts with SHANK3. Interacts with GPR85. Interacts with CACNG2 and MPP2 (via the SH3-Guanylate kinase-like sub-module). Interacts with ADGRB1. Found in a complex with PRR7 and GRIN1. Interacts (via PDZ3 domain and to lesser degree via PDZ2 domain) with PRR7. Component of the postsynaptic hippocampal AMPA-type glutamate receptor (AMPAR) complex, at least composed of pore forming AMPAR subunits GRIA1, GRIA2 and GRIA3 and AMPAR auxiliary proteins SHISA6 and SHISA7. Interacts (via its first two PDZ domains) with SHISA6 and SHISA7 (via PDZ-binding motif); the interaction is direct. Interacts (via PDZ domain 2) with SEMA4F (via PDZ-binding motif); this interaction may promote translocation of DLG4/SAP90 to the membrane. Interacts with RPH3A and GRIN2A; this ternary complex regulates NMDA receptor composition at postsynaptic membranes. Interacts with ABR and BCR. Interacts with DGKI (via PDZ-binding motif); controls the localization of DGKI to the synapse. Interacts with C9orf72, SMCR8 and RAB39B. Interacts with ZDHHC5. Interacts with PTEN (via PDZ domain-binding motif); the interaction is induced by NMDA and is required for PTEN location at postsynaptic density. Found in a complex with GRIA1, GRIA2, GRIA3, GRIA4, CACNG8 and CNIH2. Interacts with FAM81A; the interaction facilitates condensate formation via liquid-liquid phase separation. Interacts with ADGRL3. Interacts with SORCS3. In terms of processing, palmitoylated. Palmitoylation is required for targeting to postsynaptic density, plasma membrane and synapses. Palmitoylation by ZDHHC2 occurs when the synaptic activity decreases and induces DLG4 synaptic clustering. Palmitoylation by ZDHHC15 regulates trafficking to the postsynaptic density and function in synaptogenesis. Palmitoylation may play a role in glutamate receptor GRIA1 synapse clustering. Depalmitoylated by ABHD17A and ABHD17B and to a lesser extent by ABHD17C, ABHD12, ABHD13, LYPLA1 and LYPLA2. Undergoes rapid synaptic palmitoylation/depalmitoylation cycle during neuronal development which slows down in mature neurons. Ubiquitinated by MDM2 in response to NMDA receptor activation, leading to proteasome-mediated degradation of DLG4 which is required for AMPA receptor endocytosis. In terms of tissue distribution, expressed in brain (at protein level). Detected in juxtaparanodal zones in the central nervous system and at nerve terminal plexuses of basket cells in the cerebellum. Expressed in cerebrum. Expressed in hippocampal neurons (at protein level). Isoform 1 and isoform 2: highly expressed in cerebellum, cortex, hippocampus, and corpus striatum.

Its subcellular location is the cell membrane. It is found in the postsynaptic density. The protein localises to the synapse. The protein resides in the cytoplasm. It localises to the cell projection. Its subcellular location is the axon. It is found in the dendritic spine. The protein localises to the dendrite. The protein resides in the presynapse. Postsynaptic scaffolding protein that plays a critical role in synaptogenesis and synaptic plasticity by providing a platform for the postsynaptic clustering of crucial synaptic proteins. Interacts with the cytoplasmic tail of NMDA receptor subunits and shaker-type potassium channels. Required for synaptic plasticity associated with NMDA receptor signaling. Overexpression or depletion of DLG4 changes the ratio of excitatory to inhibitory synapses in hippocampal neurons. May reduce the amplitude of ASIC3 acid-evoked currents by retaining the channel intracellularly. May regulate the intracellular trafficking of ADR1B. Also regulates AMPA-type glutamate receptor (AMPAR) immobilization at postsynaptic density keeping the channels in an activated state in the presence of glutamate and preventing synaptic depression. Under basal conditions, cooperates with FYN to stabilize palmitoyltransferase ZDHHC5 at the synaptic membrane through FYN-mediated phosphorylation of ZDHHC5 and its subsequent inhibition of association with endocytic proteins. This chain is Disks large homolog 4, found in Rattus norvegicus (Rat).